A 432-amino-acid chain; its full sequence is Tubulin-specific chaperone cofactor E-like protein (432 aa).

7 LRR repeats span residues A69–N94, L95–P117, V118–L140, L143–S167, T168–K191, F193–Q217, and L218–R242. Residues I254 to F295 form an LRRCT region. The ubiquitin-like (UBL) stretch occupies residues V324–I415.

It localises to the cytoplasm. Its subcellular location is the cytoskeleton. Functionally, acts as a regulator of tubulin stability. Involved in microtubule-dependent neuronal function. May be involved in tubulin acetylation/deacetylation pathway. This Caenorhabditis elegans protein is Tubulin-specific chaperone cofactor E-like protein.